The chain runs to 428 residues: Enolase (428 aa).

Residue glutamine 163 coordinates (2R)-2-phosphoglycerate. The active-site Proton donor is glutamate 205. Residues aspartate 242, glutamate 285, and aspartate 312 each contribute to the Mg(2+) site. (2R)-2-phosphoglycerate-binding residues include lysine 337, arginine 366, serine 367, and lysine 388. Catalysis depends on lysine 337, which acts as the Proton acceptor.

Belongs to the enolase family. It depends on Mg(2+) as a cofactor.

Its subcellular location is the cytoplasm. The protein localises to the secreted. The protein resides in the cell surface. It catalyses the reaction (2R)-2-phosphoglycerate = phosphoenolpyruvate + H2O. The protein operates within carbohydrate degradation; glycolysis; pyruvate from D-glyceraldehyde 3-phosphate: step 4/5. Functionally, catalyzes the reversible conversion of 2-phosphoglycerate (2-PG) into phosphoenolpyruvate (PEP). It is essential for the degradation of carbohydrates via glycolysis. This chain is Enolase, found in Rhodopirellula baltica (strain DSM 10527 / NCIMB 13988 / SH1).